We begin with the raw amino-acid sequence, 573 residues long: O-fucosyltransferase 20 (573 aa).

The Cytoplasmic segment spans residues 1–60; it reads MALSKNSNSNSFNKKKVSYISVPSQIINSLSSSSLQSLLVSPKKSSRSTNRFSFSYRNPR. Residues 61–81 form a helical; Signal-anchor for type II membrane protein membrane-spanning segment; sequence IWFFTLFLVSLFGMLKLGFNV. Residues 82 to 573 are Lumenal-facing; it reads DPISLPFSRY…RQQQEQQSDA (492 aa). An N-linked (GlcNAc...) asparagine glycan is attached at Asn-138. 344 to 346 provides a ligand contact to substrate; sequence HLR. Residues Asn-385 and Asn-517 are each glycosylated (N-linked (GlcNAc...) asparagine). Over residues 547 to 556 the composition is skewed to basic and acidic residues; sequence AGKDVTKHPV. Residues 547–573 are disordered; the sequence is AGKDVTKHPVPECMCSDRQQQEQQSDA. Residues 563 to 573 show a composition bias toward polar residues; the sequence is DRQQQEQQSDA.

The protein belongs to the glycosyltransferase GT106 family. Interacts with RACK1A. Highly expressed in shoot apical meristem (SAM) and in young vegetative tissues.

The protein localises to the golgi apparatus membrane. It functions in the pathway glycan metabolism. In terms of biological role, may play a role in the biosynthesis of matrix polysaccharides and contribute to the biomechanics and development of the plant cell wall. This is O-fucosyltransferase 20 from Arabidopsis thaliana (Mouse-ear cress).